Consider the following 814-residue polypeptide: Lon protease (814 aa).

The tract at residues 1 to 20 is disordered; that stretch reads MANEAHNIEHTDPEFRDDSA. A Lon N-terminal domain is found at 25-219; it reads LPLLPVRDTV…KINQHLAKEL (195 aa). ATP is bound at residue 372–379; that stretch reads GPPGVGKT. The 183-residue stretch at 610 to 792 folds into the Lon proteolytic domain; sequence TKRAGVVVGL…DEVLEIALPS (183 aa). Residues Ser697 and Lys740 contribute to the active site.

The protein belongs to the peptidase S16 family. In terms of assembly, homohexamer. Organized in a ring with a central cavity.

It localises to the cytoplasm. The catalysed reaction is Hydrolysis of proteins in presence of ATP.. ATP-dependent serine protease that mediates the selective degradation of mutant and abnormal proteins as well as certain short-lived regulatory proteins. Required for cellular homeostasis and for survival from DNA damage and developmental changes induced by stress. Degrades polypeptides processively to yield small peptide fragments that are 5 to 10 amino acids long. Binds to DNA in a double-stranded, site-specific manner. This Koribacter versatilis (strain Ellin345) protein is Lon protease.